Reading from the N-terminus, the 63-residue chain is Large ribosomal subunit protein uL29 (63 aa).

It belongs to the universal ribosomal protein uL29 family.

The polypeptide is Large ribosomal subunit protein uL29 (Haemophilus influenzae (strain 86-028NP)).